The chain runs to 417 residues: Serine protease hepsin (417 aa).

Residues 1–23 (MAQKEGGRTVPCCSRPKVAALTA) are Cytoplasmic-facing. A helical; Signal-anchor for type II membrane protein membrane pass occupies residues 24–44 (GTLLLLTAIGAASWAIVAVLL). Residues 45–417 (RSDQEPLYPV…SEASGMVTQL (373 aa)) lie on the Extracellular side of the membrane. The SRCR domain occupies 54–151 (VQVSSADARL…RGRFLAAICQ (98 aa)). 8 disulfides stabilise this stretch: Cys77/Cys140, Cys90/Cys150, Cys119/Cys138, Cys153/Cys277, Cys188/Cys204, Cys291/Cys359, Cys322/Cys338, and Cys349/Cys381. N-linked (GlcNAc...) asparagine glycosylation occurs at Asn112. The Peptidase S1 domain occupies 163–405 (IVGGRDTSLG…FREWIFQAIK (243 aa)). Catalysis depends on charge relay system residues His203 and Asp257. Residue Ser353 is the Charge relay system of the active site.

The protein belongs to the peptidase S1 family. In terms of tissue distribution, detected in liver and kidney.

The protein localises to the cell membrane. Its subcellular location is the apical cell membrane. It catalyses the reaction Cleavage after basic amino-acid residues, with Arg strongly preferred to Lys.. Its function is as follows. Serine protease that cleaves extracellular substrates, and contributes to the proteolytic processing of growth factors, such as HGF and MST1/HGFL. Plays a role in cell growth and maintenance of cell morphology. Plays a role in the proteolytic processing of ACE2. Mediates the proteolytic cleavage of urinary UMOD that is required for UMOD polymerization. This Homo sapiens (Human) protein is Serine protease hepsin (HPN).